A 166-amino-acid polypeptide reads, in one-letter code: Large ribosomal subunit protein uL10 (166 aa).

Belongs to the universal ribosomal protein uL10 family. As to quaternary structure, part of the ribosomal stalk of the 50S ribosomal subunit. The N-terminus interacts with L11 and the large rRNA to form the base of the stalk. The C-terminus forms an elongated spine to which L12 dimers bind in a sequential fashion forming a multimeric L10(L12)X complex.

Forms part of the ribosomal stalk, playing a central role in the interaction of the ribosome with GTP-bound translation factors. This Streptococcus pneumoniae (strain ATCC 700669 / Spain 23F-1) protein is Large ribosomal subunit protein uL10.